Reading from the N-terminus, the 452-residue chain is Ribosomal L1 domain-containing protein 1 (452 aa).

Met-1 carries the N-acetylmethionine modification. Residues Lys-119 and Lys-253 each participate in a glycyl lysine isopeptide (Lys-Gly) (interchain with G-Cter in SUMO2) cross-link. Residues 277 to 350 (LRSLRKQELK…QKVTEECEEA (74 aa)) adopt a coiled-coil conformation. Residues 283–452 (QELKKRKREN…DKKTKAAHSN (170 aa)) form a disordered region. Positions 292–301 (NAKLKKESKM) are enriched in basic and acidic residues. A compositionally biased stretch (polar residues) spans 309 to 319 (ATSLLTQSGLA). Residues 330–341 (QKKKTNKAHKKQ) are compositionally biased toward basic residues. Thr-334, Thr-344, Thr-360, Thr-399, and Thr-407 each carry phosphothreonine. Over residues 414-423 (KDVQEFRKPE) the composition is skewed to basic and acidic residues. Residues 425–440 (SSFSTPRKSGKKASNT) are compositionally biased toward polar residues. Residue Thr-429 is modified to Phosphothreonine. An N6-acetyllysine modification is found at Lys-432. Ser-433 carries the post-translational modification Phosphoserine.

It belongs to the universal ribosomal protein uL1 family. Highly divergent. Interacts with ING1. Interacts with KPNA7 and KPNA2.

The protein localises to the nucleus. Its subcellular location is the nucleolus. In terms of biological role, regulates cellular senescence through inhibition of PTEN translation. Acts as a pro-apoptotic regulator in response to DNA damage. This chain is Ribosomal L1 domain-containing protein 1, found in Mus musculus (Mouse).